Consider the following 218-residue polypeptide: Small ribosomal subunit protein uS3c (218 aa).

Positions 47–117 (VRTHIRNSSN…KLKITLSEID (71 aa)) constitute a KH type-2 domain.

This sequence belongs to the universal ribosomal protein uS3 family. As to quaternary structure, part of the 30S ribosomal subunit.

The protein resides in the plastid. It is found in the chloroplast. The sequence is that of Small ribosomal subunit protein uS3c (rps3) from Spirogyra maxima (Green alga).